A 59-amino-acid polypeptide reads, in one-letter code: Chromatin protein Cren7 (59 aa).

It belongs to the Cren7 family. As to quaternary structure, monomer. Post-translationally, methylated at multiple sites, to varying extents.

It localises to the chromosome. The protein localises to the cytoplasm. Its function is as follows. A chromatin protein, binds double-stranded DNA without sequence specificity. Constrains negative DNA supercoils. The sequence is that of Chromatin protein Cren7 from Pyrobaculum arsenaticum (strain DSM 13514 / JCM 11321 / PZ6).